Here is a 506-residue protein sequence, read N- to C-terminus: Chromosomal replication initiator protein DnaA (506 aa).

The domain I, interacts with DnaA modulators stretch occupies residues 1 to 87 (MSVELWQQCV…IGSRRSSAPR (87 aa)). The domain II stretch occupies residues 87-169 (RAAPNAPVSA…QVEGALKHTS (83 aa)). A disordered region spans residues 135 to 154 (DSFDAMAEPAAAPPSGGGRA). Over residues 139-148 (AMAEPAAAPP) the composition is skewed to low complexity. Positions 170-386 (YLNRTFTFDT…GALKRVIAHS (217 aa)) are domain III, AAA+ region. 4 residues coordinate ATP: glycine 214, glycine 216, lysine 217, and threonine 218. Residues 387 to 506 (HFMGRDITIE…YKNLLRTLTT (120 aa)) are domain IV, binds dsDNA.

The protein belongs to the DnaA family. Oligomerizes as a right-handed, spiral filament on DNA at oriC.

The protein localises to the cytoplasm. Its function is as follows. Plays an essential role in the initiation and regulation of chromosomal replication. ATP-DnaA binds to the origin of replication (oriC) to initiate formation of the DNA replication initiation complex once per cell cycle. Binds the DnaA box (a 9 base pair repeat at the origin) and separates the double-stranded (ds)DNA. Forms a right-handed helical filament on oriC DNA; dsDNA binds to the exterior of the filament while single-stranded (ss)DNA is stabiized in the filament's interior. The ATP-DnaA-oriC complex binds and stabilizes one strand of the AT-rich DNA unwinding element (DUE), permitting loading of DNA polymerase. After initiation quickly degrades to an ADP-DnaA complex that is not apt for DNA replication. Binds acidic phospholipids. Functionally, non-cooperatively binds DnaA boxes in the minimal plasmid RK2 replication origin (oriV). In vitro in the presence of plasmid RK2-derived TrfA and E.coli protein HU, forms an open complex at oriV. This complex was not however competent for formation of a pre-priming complex with E.coli DnaB and DnaC. Broad host range plasmid RK2 requires not only DnaA for replication but also TrfA and host factors. This Pseudomonas putida (strain ATCC 47054 / DSM 6125 / CFBP 8728 / NCIMB 11950 / KT2440) protein is Chromosomal replication initiator protein DnaA.